The sequence spans 231 residues: MGCVSSCFRVEDIDEYMNPNSSVYRNCPCIRCLAHNFLNLYISVFRRGETRSLPSSVQATASITSSSSHDNFLSEAFRSTPRPLPYDADPRYFRSLVSRREKGSSHSHEEVEPLRSDSDADSESFGVGGCKWANNKSTLSDKDSKEEYSSKSSLRILRSRSKSIMADSENMYILSEDEDVCPTCLEEYTSENPKIVTKCSHHFHLSCIYEWMERSENCPVCGKVMEFNETP.

The span at 103-118 shows a compositional bias: basic and acidic residues; the sequence is GSSHSHEEVEPLRSDS. Residues 103–125 form a disordered region; it reads GSSHSHEEVEPLRSDSDADSESF. Residues 181–222 form an RING-type; atypical zinc finger; that stretch reads CPTCLEEYTSENPKIVTKCSHHFHLSCIYEWMERSENCPVCG.

It is found in the cytoplasm. The enzyme catalyses S-ubiquitinyl-[E2 ubiquitin-conjugating enzyme]-L-cysteine + [acceptor protein]-L-lysine = [E2 ubiquitin-conjugating enzyme]-L-cysteine + N(6)-ubiquitinyl-[acceptor protein]-L-lysine.. The protein operates within protein modification; protein ubiquitination. Its function is as follows. Mediates E2-dependent protein ubiquitination. The protein is E3 ubiquitin-protein ligase At3g02290 of Arabidopsis thaliana (Mouse-ear cress).